Reading from the N-terminus, the 376-residue chain is Zinc finger CCCH domain-containing protein C337.12 (376 aa).

Positions 2–25 (NEQQLLENIASLAGAINQYKNEKE) form a coiled coil. Positions 60 to 95 (SKSTAASPPYVIPSTSSNADDANKEPEKQSTSDYVS) are disordered. Basic and acidic residues predominate over residues 80 to 89 (DANKEPEKQS). A coiled-coil region spans residues 105–140 (KKNILEHDLQARKANLESYRAKLEKEYKTLAENKIQ). C3H1-type zinc fingers lie at residues 202–228 (SPSA…FVHE), 229–256 (PTRK…HELD), 257–283 (PRRI…HIHY), and 284–312 (SENA…HILQ). The interval 347–376 (SKTAGSINPEDSGSEIGSNSLESNLDFISV) is disordered. The segment covering 349 to 369 (TAGSINPEDSGSEIGSNSLES) has biased composition (polar residues).

Its subcellular location is the nucleus. This Schizosaccharomyces pombe (strain 972 / ATCC 24843) (Fission yeast) protein is Zinc finger CCCH domain-containing protein C337.12.